The following is an 87-amino-acid chain: Small ribosomal subunit protein bS20 (87 aa).

The disordered stretch occupies residues 1–20 (MANSAQARKRARTALKQRAH). Basic residues predominate over residues 7 to 19 (ARKRARTALKQRA).

Belongs to the bacterial ribosomal protein bS20 family.

Binds directly to 16S ribosomal RNA. This Chromobacterium violaceum (strain ATCC 12472 / DSM 30191 / JCM 1249 / CCUG 213 / NBRC 12614 / NCIMB 9131 / NCTC 9757 / MK) protein is Small ribosomal subunit protein bS20.